The sequence spans 96 residues: Co-chaperonin GroES (96 aa).

The protein belongs to the GroES chaperonin family. Heptamer of 7 subunits arranged in a ring. Interacts with the chaperonin GroEL.

It is found in the cytoplasm. Together with the chaperonin GroEL, plays an essential role in assisting protein folding. The GroEL-GroES system forms a nano-cage that allows encapsulation of the non-native substrate proteins and provides a physical environment optimized to promote and accelerate protein folding. GroES binds to the apical surface of the GroEL ring, thereby capping the opening of the GroEL channel. The chain is Co-chaperonin GroES from Solidesulfovibrio magneticus (strain ATCC 700980 / DSM 13731 / RS-1) (Desulfovibrio magneticus).